Reading from the N-terminus, the 339-residue chain is Fructose-1,6-bisphosphatase class 1 (339 aa).

Residues E92, D114, L116, and D117 each coordinate Mg(2+). Residues 117–120 (DGSS), N213, and K279 each bind substrate. Position 285 (E285) interacts with Mg(2+).

This sequence belongs to the FBPase class 1 family. As to quaternary structure, homotetramer. The cofactor is Mg(2+).

The protein resides in the cytoplasm. The enzyme catalyses beta-D-fructose 1,6-bisphosphate + H2O = beta-D-fructose 6-phosphate + phosphate. It functions in the pathway carbohydrate biosynthesis; gluconeogenesis. The polypeptide is Fructose-1,6-bisphosphatase class 1 (Acidovorax sp. (strain JS42)).